A 114-amino-acid chain; its full sequence is Protein ORF3 (114 aa).

Hydrophobic stretches follow at residues 6–22 (CALG…CLCC) and 33–53 (AVVG…GLIL). Residues 28–68 (VSRLAAVVGGAAAVPAVVSGVTGLILSPSQSPIFIQPTPLP) form an interaction with host HPX region. Residues 72–114 (PLRPGLDLAFANQPGHLAPLGEIRPSAPPLPPVADLPQPGLRR) form a homodimerization, and interaction with host AMBP/bikunin region. A disordered region spans residues 91–114 (LGEIRPSAPPLPPVADLPQPGLRR). Residues 95 to 104 (RPSAPPLPPV) form an interaction with host SRC, HCK, FYN, PIK3R3 and GRB2 region. The PTAP/PSAP motif signature appears at 96-99 (PSAP).

It belongs to the hepevirus ORF3 protein family. As to quaternary structure, forms homooligomers. Interacts with host SRC, HCK, FYN, PIK3R3 and GRB2 (via SH3 domain); binding does not activate the kinases. Interacts with host AMBP/bikunin and AMBP/alpha-1-microglobulin peptides. Interacts with host HPX/hemopexin. Interacts (when phosphorylated) with capsid protein ORF2. Interacts with host TSG101; this interaction plays a role in viral release from the host cell. Interacts with host SIRPA; this interaction down-regulates the phosphorylation of host IRF3. Post-translationally, palmitoylated in the N-terminus.

The protein resides in the host endoplasmic reticulum membrane. Its subcellular location is the host cytoplasm. The protein localises to the host cytoskeleton. It localises to the virion. It is found in the host cell membrane. Small multifunctional phosphoprotein involved in virion morphogenesis, egress and counteracting host innate immunity. Plays critical roles in the final steps of viral release by interacting with host TSG101, a member of the vacuolar protein-sorting pathway and using other cellular host proteins involved in vesicle formation pathway. Also acts as a viroporin and forms ion conductive pores allowing viral particle release. Impairs the generation of type I interferon by down-regulating host TLR3 and TLR7 as well as their downstream signaling pathways. Down-regulates the phosphorylation of host IRF3 via the interaction with host SIRP-alpha, thereby inhibiting IFN-I expression. Interacts with host microtubules. The sequence is that of Protein ORF3 from Hepatitis E virus genotype 2 (isolate Human/Mexico) (HEV-2).